The following is a 172-amino-acid chain: Probable phosphatase YqeG (172 aa).

In terms of biological role, has low dephosphorylation activity on GMP and glucose-6-phosphate. This Bacillus subtilis (strain 168) protein is Probable phosphatase YqeG (yqeG).